Reading from the N-terminus, the 702-residue chain is Polyribonucleotide nucleotidyltransferase 3 (702 aa).

Positions 483 and 489 each coordinate Mg(2+). The 60-residue stretch at 550-609 (PKVTQIKVHPDKVREVIGAGGKVINKIIDETGCKITIENDGTIYVAAPDQESSRRAVEMI) folds into the KH domain. Residues 619–687 (GEVYTGKVIK…PQGKIGLSRK (69 aa)) enclose the S1 motif domain.

It belongs to the polyribonucleotide nucleotidyltransferase family. The cofactor is Mg(2+).

It localises to the cytoplasm. It catalyses the reaction RNA(n+1) + phosphate = RNA(n) + a ribonucleoside 5'-diphosphate. Involved in mRNA degradation. Catalyzes the phosphorolysis of single-stranded polyribonucleotides processively in the 3'- to 5'-direction. This Alkaliphilus metalliredigens (strain QYMF) protein is Polyribonucleotide nucleotidyltransferase 3.